Consider the following 372-residue polypeptide: Formylglycine-generating enzyme (372 aa).

The first 31 residues, 1-31 (MAAPAREPALRCCIRLARVFLLLVLACEVAG), serve as a signal peptide directing secretion. Cys48 and Cys50 are oxidised to a cystine. Positions 61 to 80 (SSAAAQRYSREANAPGLTSG) are disordered. Ca(2+) is bound at residue Glu128. N-linked (GlcNAc...) asparagine glycosylation is present at Asn139. Intrachain disulfides connect Cys216-Cys363 and Cys233-Cys344. Residues Asn257, Ile258, Asp271, Phe273, Asn291, Gly294, and Glu298 each coordinate Ca(2+). Cys334 and Cys339 together coordinate Cu(2+). Residues 339-358 (CYRYRCAARSQNTPDSSASN) are interaction with sulfatases.

Belongs to the sulfatase-modifying factor family. Monomer, homodimer and heterodimer with SUMF2. Cu(2+) is required as a cofactor. Post-translationally, N-glycosylated. Contains high-mannose-type oligosaccharides.

It is found in the endoplasmic reticulum lumen. The catalysed reaction is L-cysteinyl-[sulfatase] + 2 a thiol + O2 = an organic disulfide + 3-oxo-L-alanyl-[sulfatase] + hydrogen sulfide + H2O + H(+). The protein operates within protein modification; sulfatase oxidation. Functionally, oxidase that catalyzes the conversion of cysteine to 3-oxoalanine on target proteins, using molecular oxygen and an unidentified reducing agent. 3-oxoalanine modification, which is also named formylglycine (fGly), occurs in the maturation of arylsulfatases and some alkaline phosphatases that use the hydrated form of 3-oxoalanine as a catalytic nucleophile. Known substrates include GALNS, ARSA, STS and ARSE. The chain is Formylglycine-generating enzyme from Mus musculus (Mouse).